Here is a 1291-residue protein sequence, read N- to C-terminus: 1-phosphatidylinositol 4,5-bisphosphate phosphodiesterase gamma-1 (1291 aa).

At alanine 2 the chain carries N-acetylalanine. The region spanning arginine 27–glutamate 142 is the PH 1 domain. The region spanning glutamine 152–arginine 187 is the EF-hand domain. Ca(2+)-binding residues include aspartate 165, asparagine 167, glutamate 169, arginine 171, and aspartate 176. The 145-residue stretch at aspartate 320–lysine 464 folds into the PI-PLC X-box domain. Residues histidine 335 and histidine 380 contribute to the active site. The PH 2; first part domain occupies serine 489–threonine 523. Tyrosine 506 bears the Phosphotyrosine mark. The segment at glutamate 522–leucine 544 is disordered. SH2 domains lie at tryptophan 550–valine 657 and tryptophan 668–isoleucine 756. Phosphotyrosine; by SYK is present on tyrosine 771. 2 positions are modified to phosphotyrosine: tyrosine 775 and tyrosine 783. Tyrosine 783 carries the phosphotyrosine; by ITK, SYK and TXK modification. Residues threonine 791–serine 851 enclose the SH3 domain. Residues phenylalanine 895–glutamine 931 form the PH 2; second part domain. The PI-PLC Y-box domain occupies leucine 953–arginine 1070. Tyrosine 977 carries the post-translational modification Phosphotyrosine. The C2 domain occupies aspartate 1071–asparagine 1194. Residues serine 1222, serine 1228, and serine 1249 each carry the phosphoserine modification. Tyrosine 1254 carries the phosphotyrosine modification. Serine 1264 carries the post-translational modification Phosphoserine. Positions histidine 1271 to leucine 1291 are disordered.

In terms of assembly, interacts with AGAP2 via its SH3 domain. Interacts (via SH2 domain) with RET. Interacts with FLT1 (tyrosine-phosphorylated). Interacts (via SH2 domain) with FGFR1, FGFR2, FGFR3 and FGFR4 (phosphorylated). Interacts with LAT (phosphorylated) upon TCR activation. Interacts (via SH3 domain) with the Pro-rich domain of TNK1. Associates with BLNK, VAV1, GRB2 and NCK1 in a B-cell antigen receptor-dependent fashion. Interacts with CBLB in activated T-cells; which inhibits phosphorylation. Interacts with SHB. Interacts (via SH3 domain) with the Arg/Gly-rich-flanked Pro-rich domains of KHDRBS1/SAM68. This interaction is selectively regulated by arginine methylation of KHDRBS1/SAM68. Interacts with INPP5D/SHIP1, THEMIS and CLNK. Interacts with AXL, FLT4 and KIT. Interacts with RALGPS1. Interacts (via the SH2 domains) with VIL1 (phosphorylated at C-terminus tyrosine phosphorylation sites). Interacts (via SH2 domain) with PDGFRA and PDGFRB (tyrosine phosphorylated). Interacts with PIP5K1C. Interacts with NTRK1 and NTRK2 (phosphorylated upon ligand-binding). Interacts with SYK; activates PLCG1. Interacts with GRB2, LAT and THEMIS upon TCR activation in thymocytes. Interacts with TESPA1; the association is increased with prolonged stimulation of the TCR and may facilitate the assembly of the LAT signalosome. Interacts (via C-terminal proline-rich domain (PRD)) with PLCG1 (via SH3 domain); this interaction leads to guanine nucleotide exchange from PlCG1 to DNM1 and enhances DNM1-dependent endocytosis. The cofactor is Ca(2+). Post-translationally, ubiquitinated by CBLB in activated T-cells. Tyrosine phosphorylated in response to signaling via activated FLT3, KIT and PDGFRA. Tyrosine phosphorylated by activated FGFR1, FGFR2, FGFR3 and FGFR4. Tyrosine phosphorylated by activated FLT1 and KDR. Tyrosine phosphorylated by activated PDGFRB. The receptor-mediated activation of PLCG1 involves its phosphorylation by tyrosine kinases, in response to ligation of a variety of growth factor receptors and immune system receptors. For instance, SYK phosphorylates and activates PLCG1 in response to ligation of the B-cell receptor. May be dephosphorylated by PTPRJ. Phosphorylated by ITK and TXK on Tyr-783 upon TCR activation in T-cells.

It is found in the cell projection. The protein resides in the lamellipodium. It localises to the ruffle. The enzyme catalyses a 1,2-diacyl-sn-glycero-3-phospho-(1D-myo-inositol-4,5-bisphosphate) + H2O = 1D-myo-inositol 1,4,5-trisphosphate + a 1,2-diacyl-sn-glycerol + H(+). It catalyses the reaction a 1,2-diacyl-sn-glycero-3-phospho-(1D-myo-inositol) + H2O = 1D-myo-inositol 1-phosphate + a 1,2-diacyl-sn-glycerol + H(+). Activated by phosphorylation on tyrosine residues. Functionally, mediates the production of the second messenger molecules diacylglycerol (DAG) and inositol 1,4,5-trisphosphate (IP3). Plays an important role in the regulation of intracellular signaling cascades. Becomes activated in response to ligand-mediated activation of receptor-type tyrosine kinases, such as PDGFRA, PDGFRB, EGFR, FGFR1, FGFR2, FGFR3 and FGFR4. Plays a role in actin reorganization and cell migration. Guanine nucleotide exchange factor that binds the GTPase DNM1 and catalyzes the dissociation of GDP, allowing a GTP molecule to bind in its place, therefore enhancing DNM1-dependent endocytosis. This chain is 1-phosphatidylinositol 4,5-bisphosphate phosphodiesterase gamma-1, found in Bos taurus (Bovine).